The sequence spans 143 residues: HTH-type transcriptional regulator BudR (143 aa).

One can recognise an HTH lysR-type domain in the interval 1–58; it reads MELRYLRYFVAVARERHFTRAAKALGISQPPLSQQIKRLEEEVGTPLFRRLTRGVELT. A DNA-binding region (H-T-H motif) is located at residues 18–37; sequence FTRAAKALGISQPPLSQQIK.

The protein belongs to the LysR transcriptional regulatory family.

Its function is as follows. Regulator of the budABC operon for 2,3-butanediol synthesis. The protein is HTH-type transcriptional regulator BudR (budR) of Klebsiella aerogenes (Enterobacter aerogenes).